We begin with the raw amino-acid sequence, 354 residues long: GTPase Obg (354 aa).

Residues 1–159 (MKFVDEVKIH…RDLVLELKLL (159 aa)) form the Obg domain. The OBG-type G domain maps to 160-333 (ADVGIVGYPN…LLDAVGRALF (174 aa)). Residues 166–173 (GYPNAGKS), 191–195 (FTTLT), 212–215 (DIPG), 283–286 (TKID), and 314–316 (SAV) each bind GTP. Mg(2+)-binding residues include Ser-173 and Thr-193.

It belongs to the TRAFAC class OBG-HflX-like GTPase superfamily. OBG GTPase family. In terms of assembly, monomer. The cofactor is Mg(2+).

It is found in the cytoplasm. Functionally, an essential GTPase which binds GTP, GDP and possibly (p)ppGpp with moderate affinity, with high nucleotide exchange rates and a fairly low GTP hydrolysis rate. Plays a role in control of the cell cycle, stress response, ribosome biogenesis and in those bacteria that undergo differentiation, in morphogenesis control. The protein is GTPase Obg of Anaeromyxobacter dehalogenans (strain 2CP-C).